Reading from the N-terminus, the 144-residue chain is MKSFVAKPSTIERKWYVIDATDMVVGRLASEVAKRLRGKHKPTYTPFMDCGDNIIIVNAEKVRFTGNKRNDKVYYWHSRFPGGLKSITADKELSGNHPERVLEKAIKGMLPKNVLGRQMFRKLNVYKGSEHPHTAQQPEELKLG.

Belongs to the universal ribosomal protein uL13 family. In terms of assembly, part of the 50S ribosomal subunit.

Its function is as follows. This protein is one of the early assembly proteins of the 50S ribosomal subunit, although it is not seen to bind rRNA by itself. It is important during the early stages of 50S assembly. The protein is Large ribosomal subunit protein uL13 of Magnetococcus marinus (strain ATCC BAA-1437 / JCM 17883 / MC-1).